Consider the following 256-residue polypeptide: Protein N-terminal and lysine N-methyltransferase EFM7 (256 aa).

The interval 1-26 (MSDTESLNDALGLFDEPEDFRPEKPK) is disordered. Residues Trp64, 90–92 (GAA), Asp112, Trp145, and Ser168 each bind S-adenosyl-L-methionine.

It belongs to the class I-like SAM-binding methyltransferase superfamily. EFM7 family.

Its subcellular location is the cytoplasm. Functionally, S-adenosyl-L-methionine-dependent protein methyltransferase that trimethylates the N-terminal glycine 'Gly-2' of elongation factor 1-alpha, before also catalyzing the mono- and dimethylation of 'Lys-3'. The protein is Protein N-terminal and lysine N-methyltransferase EFM7 of Candida glabrata (strain ATCC 2001 / BCRC 20586 / JCM 3761 / NBRC 0622 / NRRL Y-65 / CBS 138) (Yeast).